A 314-amino-acid chain; its full sequence is Lipoyl synthase (314 aa).

Positions 67, 72, 78, 93, 97, 100, and 306 each coordinate [4Fe-4S] cluster. The Radical SAM core domain maps to 79–295; sequence FNRGTATFMI…KNYALSIGFK (217 aa).

Belongs to the radical SAM superfamily. Lipoyl synthase family. It depends on [4Fe-4S] cluster as a cofactor.

It localises to the cytoplasm. It catalyses the reaction [[Fe-S] cluster scaffold protein carrying a second [4Fe-4S](2+) cluster] + N(6)-octanoyl-L-lysyl-[protein] + 2 oxidized [2Fe-2S]-[ferredoxin] + 2 S-adenosyl-L-methionine + 4 H(+) = [[Fe-S] cluster scaffold protein] + N(6)-[(R)-dihydrolipoyl]-L-lysyl-[protein] + 4 Fe(3+) + 2 hydrogen sulfide + 2 5'-deoxyadenosine + 2 L-methionine + 2 reduced [2Fe-2S]-[ferredoxin]. The protein operates within protein modification; protein lipoylation via endogenous pathway; protein N(6)-(lipoyl)lysine from octanoyl-[acyl-carrier-protein]: step 2/2. Its function is as follows. Catalyzes the radical-mediated insertion of two sulfur atoms into the C-6 and C-8 positions of the octanoyl moiety bound to the lipoyl domains of lipoate-dependent enzymes, thereby converting the octanoylated domains into lipoylated derivatives. This Buchnera aphidicola subsp. Baizongia pistaciae (strain Bp) protein is Lipoyl synthase.